A 224-amino-acid polypeptide reads, in one-letter code: Protein DCL, chloroplastic (224 aa).

The N-terminal 50 residues, methionine 1–threonine 50, are a transit peptide targeting the chloroplast. The tract at residues threonine 76–aspartate 98 is disordered. The span at glutamate 82–aspartate 98 shows a compositional bias: basic and acidic residues.

It is found in the plastid. The protein localises to the chloroplast. Functionally, has a function in the early stage of chloroplast development and palisade cell morphogenesis. Required for correct plastid ribosome assembly. Required for processing and maturation of 4.5S rRNA. The sequence is that of Protein DCL, chloroplastic (DCL) from Solanum lycopersicum (Tomato).